We begin with the raw amino-acid sequence, 941 residues long: Glycine dehydrogenase (decarboxylating) (941 aa).

Residue lysine 692 is modified to N6-(pyridoxal phosphate)lysine.

Belongs to the GcvP family. In terms of assembly, the glycine cleavage system is composed of four proteins: P, T, L and H. Pyridoxal 5'-phosphate is required as a cofactor.

The enzyme catalyses N(6)-[(R)-lipoyl]-L-lysyl-[glycine-cleavage complex H protein] + glycine + H(+) = N(6)-[(R)-S(8)-aminomethyldihydrolipoyl]-L-lysyl-[glycine-cleavage complex H protein] + CO2. Functionally, the glycine cleavage system catalyzes the degradation of glycine. The P protein binds the alpha-amino group of glycine through its pyridoxal phosphate cofactor; CO(2) is released and the remaining methylamine moiety is then transferred to the lipoamide cofactor of the H protein. This is Glycine dehydrogenase (decarboxylating) from Mycobacterium bovis (strain ATCC BAA-935 / AF2122/97).